Reading from the N-terminus, the 90-residue chain is MRKPELAAAIAEKADLTKEQANRVLNALLDEITGALNRKDSVTLVGFGTFLQRHRGARTGKNPQTGQPVKIKASNTVAFKPGKALRDAVN.

It belongs to the bacterial histone-like protein family. Heterodimer of an alpha and a beta chain.

Its function is as follows. Histone-like DNA-binding protein which is capable of wrapping DNA to stabilize it, and thus to prevent its denaturation under extreme environmental conditions. This Pseudomonas aeruginosa (strain ATCC 15692 / DSM 22644 / CIP 104116 / JCM 14847 / LMG 12228 / 1C / PRS 101 / PAO1) protein is DNA-binding protein HU-alpha (hupA).